A 132-amino-acid chain; its full sequence is Small ribosomal subunit protein uS8 (132 aa).

It belongs to the universal ribosomal protein uS8 family. As to quaternary structure, part of the 30S ribosomal subunit. Contacts proteins S5 and S12.

Its function is as follows. One of the primary rRNA binding proteins, it binds directly to 16S rRNA central domain where it helps coordinate assembly of the platform of the 30S subunit. In Mycoplasmopsis synoviae (strain 53) (Mycoplasma synoviae), this protein is Small ribosomal subunit protein uS8.